We begin with the raw amino-acid sequence, 506 residues long: Cytochrome P450 monooxygenase tpcB (506 aa).

C450 serves as a coordination point for heme.

The protein belongs to the cytochrome P450 family. Heme is required as a cofactor.

The protein operates within secondary metabolite biosynthesis; terpenoid biosynthesis. Functionally, cytochrome P450 monooxygenase; part of the gene cluster that mediates the biosynthesis of terpestacin. The bifunctional terpene synthase tpcA converts isopentenyl diphosphate (IPP) and dimethylallyl diphosphate (DMAPP) into the sesterterpene preterpestacin I. The C-terminal prenyltransferase (PT) domain of tpcA catalyzes formation of GFPP, whereas the N-terminal terpene cyclase (TC) domain catalyzes the cyclization of GFPP into preterpestacin I. The cytochrome P450 monooxygenase tpcB then hydroxylates preterpestacin I to yield 24-hydroxypreterpstacin I (renamed as preterpestacin II) whereas the cytochrome P450 monooxygenase tpcC further hydroxylates preterpestacin II to yield 16,17-dihydroxypreterpestacin II (renamed as preterpestacin III). Finally, the FAD-dependent monooxygenase tpcD converts preterpestacin III into terpestacin. The polypeptide is Cytochrome P450 monooxygenase tpcB (Cochliobolus heterostrophus (strain C5 / ATCC 48332 / race O) (Southern corn leaf blight fungus)).